Consider the following 349-residue polypeptide: Rhodopsin (349 aa).

The Extracellular portion of the chain corresponds to 1–33 (TEGPYFYIPMSNATGIVRSPYEYPQYYLVYPAA). N-linked (GlcNAc...) asparagine glycosylation is present at asparagine 12. Residues 34-58 (YAVLGAYMFFLIIFGFPVNFLTLYV) form a helical membrane-spanning segment. Over 59 to 70 (TIEHKKLRTPLN) the chain is Cytoplasmic. A helical membrane pass occupies residues 71–93 (YILLNLAVADLFMVIGGFTTTIY). Residues 94–107 (TSMHGYFVLGRLGC) lie on the Extracellular side of the membrane. A disulfide bridge connects residues cysteine 107 and cysteine 184. The chain crosses the membrane as a helical span at residues 108-130 (NLEGFSATLGGMIGLWSLVVLAI). The 'Ionic lock' involved in activated form stabilization motif lies at 131-133 (ERW). Over 131–149 (ERWVVVCKPMSNFRFGENH) the chain is Cytoplasmic. A helical transmembrane segment spans residues 150–170 (AIMGVTLTWVMGLACTVPPLV). Over 171-199 (GWSRYIPEGMQCSCGIDYYTRAEGFNNDS) the chain is Extracellular. A glycan (N-linked (GlcNAc...) asparagine) is linked at asparagine 197. A helical membrane pass occupies residues 200–221 (YVLYMFVCHFLIPLVVIFFCYG). Topologically, residues 222-249 (RLLCAVKEAAAAQQESETTQRAEREVTR) are cytoplasmic. A helical transmembrane segment spans residues 250 to 271 (MVILMVIGFLVCWLPYASVAWY). The Extracellular portion of the chain corresponds to 272 to 283 (IFTHQGSEFGPL). Residues 284-305 (FMTIPAFFAKSSSIYNPVIYIC) traverse the membrane as a helical segment. Residue lysine 293 is modified to N6-(retinylidene)lysine. Over 306 to 349 (MNKQFRQCMLTTLFCGKNPFEEEEGASSTKTEASSASSSSVSPA) the chain is Cytoplasmic. Cysteine 320 carries the S-palmitoyl cysteine lipid modification. A disordered region spans residues 326–349 (EEEEGASSTKTEASSASSSSVSPA). Positions 331–349 (ASSTKTEASSASSSSVSPA) are enriched in low complexity.

Belongs to the G-protein coupled receptor 1 family. Opsin subfamily. Post-translationally, phosphorylated on some or all of the serine and threonine residues present in the C-terminal region. In terms of processing, contains one covalently linked retinal chromophore.

It localises to the membrane. The protein localises to the cell projection. Its subcellular location is the cilium. It is found in the photoreceptor outer segment. Its function is as follows. Photoreceptor required for image-forming vision at low light intensity. While most salt water fish species use retinal as chromophore, most freshwater fish use 3-dehydroretinal, or a mixture of retinal and 3-dehydroretinal. Light-induced isomerization of 11-cis to all-trans retinal triggers a conformational change that activates signaling via G-proteins. Subsequent receptor phosphorylation mediates displacement of the bound G-protein alpha subunit by arrestin and terminates signaling. This Myripristis violacea (Lattice soldierfish) protein is Rhodopsin (rho).